A 495-amino-acid chain; its full sequence is Glycerol kinase (495 aa).

Thr-11 is a binding site for ADP. ATP contacts are provided by Thr-11, Thr-12, and Ser-13. Thr-11 is a binding site for sn-glycerol 3-phosphate. Arg-15 is a binding site for ADP. 4 residues coordinate sn-glycerol 3-phosphate: Arg-81, Glu-82, Tyr-133, and Asp-242. The glycerol site is built by Arg-81, Glu-82, Tyr-133, Asp-242, and Gln-243. Residues Thr-264 and Gly-307 each coordinate ADP. Residues Thr-264, Gly-307, Gln-311, and Gly-410 each contribute to the ATP site. Gly-410 serves as a coordination point for ADP.

Belongs to the FGGY kinase family.

It catalyses the reaction glycerol + ATP = sn-glycerol 3-phosphate + ADP + H(+). It participates in polyol metabolism; glycerol degradation via glycerol kinase pathway; sn-glycerol 3-phosphate from glycerol: step 1/1. Inhibited by fructose 1,6-bisphosphate (FBP). Functionally, key enzyme in the regulation of glycerol uptake and metabolism. Catalyzes the phosphorylation of glycerol to yield sn-glycerol 3-phosphate. The chain is Glycerol kinase from Roseobacter denitrificans (strain ATCC 33942 / OCh 114) (Erythrobacter sp. (strain OCh 114)).